Reading from the N-terminus, the 784-residue chain is Toll-like receptor 2 (784 aa).

The signal sequence occupies residues 1 to 20 (MPRALWTAWVWAVIILSMEG). The Extracellular portion of the chain corresponds to 21–587 (ASHQASSLSC…ARLSLSECHR (567 aa)). Cysteine 30 and cysteine 36 form a disulfide bridge. 19 LRR repeats span residues 54–77 (VKSL…RCVN), 78–101 (LKTL…HLRN), 102–125 (LEYL…SLYA), 126–150 (LKFL…HLPN), 151–175 (LRTL…GLIF), 176–199 (LEEL…SIQN), 200–223 (ISHL…IVSS), 224–250 (LDCL…MNTS), 251–278 (VKKL…YVSG), 279–308 (ILEV…HLGN), 309–337 (VETL…LTGK), 338–361 (VKRV…HLKS), 362–388 (LEYL…AWPF), 389–414 (LQTL…TLKN), 415–437 (LNNL…WPGK), 438–457 (MKQL…CLPQ), 458–478 (TLEI…ILPQ), 479–500 (LKEL…FLPV), and 501–524 (LSVM…SFPQ). Asparagine 114 is a glycosylation site (N-linked (GlcNAc...) asparagine). A glycan (N-linked (GlcNAc...) asparagine) is linked at asparagine 199. Residue asparagine 248 is glycosylated (N-linked (GlcNAc...) asparagine). Cysteine 353 and cysteine 382 are oxidised to a cystine. Residues cysteine 432 and cysteine 454 are joined by a disulfide bond. N-linked (GlcNAc...) asparagine glycosylation occurs at asparagine 442. Positions 525 to 579 (LKALEAGGNNFICSCDFLSFTQGQQALARVLVDWPDGYRCDAPSHVRGQRVQDAR) constitute an LRRCT domain. The helical transmembrane segment at 588–608 (AAVVSAVCCALFLLLLLTGVL) threads the bilayer. Topologically, residues 609-784 (CHRFHGLWYM…WLNLRAAIRS (176 aa)) are cytoplasmic. The TIR domain occupies 639–782 (LCYDAFVSYS…AFWLNLRAAI (144 aa)). Lysine 754 participates in a covalent cross-link: Glycyl lysine isopeptide (Lys-Gly) (interchain with G-Cter in ubiquitin). The short motif at 761-778 (YLEWPTDETQQEAFWLNL) is the ATG16L1-binding motif element.

The protein belongs to the Toll-like receptor family. Interacts with LY96, TLR1 and TLR6 (via extracellular domain). TLR2 seems to exist in heterodimers with either TLR1 or TLR6 before stimulation by the ligand. The heterodimers form bigger oligomers in response to their corresponding ligands as well as further heterotypic associations with other receptors such as CD14 and/or CD36. Binds MYD88 (via TIR domain). Interacts with TICAM1. Interacts with CNPY3. Interacts with ATG16L1. Interacts with PPP1R11. Interacts with TICAM2. Interacts with TIRAP. In terms of processing, ubiquitinated at Lys-754 by PPP1R11, leading to its degradation. Deubiquitinated by USP2. Glycosylation of Asn-442 is critical for secretion of the N-terminal ectodomain of TLR2.

The protein resides in the membrane. It is found in the cytoplasmic vesicle. The protein localises to the phagosome membrane. Its subcellular location is the membrane raft. In terms of biological role, cooperates with LY96 to mediate the innate immune response to bacterial lipoproteins and other microbial cell wall components. Cooperates with TLR1 or TLR6 to mediate the innate immune response to bacterial lipoproteins or lipopeptides. Acts via MYD88 and TRAF6, leading to NF-kappa-B activation, cytokine secretion and the inflammatory response. May also promote apoptosis in response to lipoproteins. Forms activation clusters composed of several receptors depending on the ligand, these clusters trigger signaling from the cell surface and subsequently are targeted to the Golgi in a lipid-raft dependent pathway. Forms the cluster TLR2:TLR6:CD14:CD36 in response to diacylated lipopeptides and TLR2:TLR1:CD14 in response to triacylated lipopeptides. The chain is Toll-like receptor 2 (TLR2) from Capra hircus (Goat).